The following is a 69-amino-acid chain: Cold shock-like protein CspC (69 aa).

Positions 6 to 66 (GQVKWFNESK…GQKGPAAVNV (61 aa)) constitute a CSD domain.

It localises to the cytoplasm. The protein is Cold shock-like protein CspC (cspC) of Shigella flexneri.